The primary structure comprises 442 residues: Meiosis-specific with OB domain-containing protein (442 aa).

Residues 167 to 272 (IINVLAAVKS…EANILLNFIR (106 aa)) constitute a DNA-binding region (OB).

The protein belongs to the MEIOB family. As to quaternary structure, component of a multiprotein complex with RPA2 and SPATA22. Interacts with SPATA22. Interacts with the complex BRME1:HSF2BP:BRCA2. In terms of tissue distribution, in fetal gonads, specifically expressed in the ovary starting at the 14th weeks post fertilization. In the adult, restricted to testis.

The protein resides in the cytoplasm. It localises to the nucleus. The protein localises to the chromosome. In terms of biological role, single-stranded DNA-binding protein required for homologous recombination in meiosis I. Required for double strand breaks (DSBs) repair and crossover formation and promotion of faithful and complete synapsis. Not required for the initial loading of recombinases but required to maintain a proper number of RAD51 and DMC1 foci after the zygotene stage. May act by ensuring the stabilization of recombinases, which is required for successful homology search and meiotic recombination. Displays Single-stranded DNA 3'-5' exonuclease activity in vitro. This Homo sapiens (Human) protein is Meiosis-specific with OB domain-containing protein.